The chain runs to 890 residues: Protein translocase subunit SecA (890 aa).

Residues Gln86, 104 to 108 (GEGKT), and Asp493 each bind ATP. Residues 851-872 (EASHGDGDAKKAPVVKKEESGR) are compositionally biased toward basic and acidic residues. The tract at residues 851–873 (EASHGDGDAKKAPVVKKEESGRN) is disordered. Zn(2+) contacts are provided by Cys876, Cys878, Cys887, and Cys888.

It belongs to the SecA family. As to quaternary structure, monomer and homodimer. Part of the essential Sec protein translocation apparatus which comprises SecA, SecYEG and auxiliary proteins SecDF. Other proteins may also be involved. The cofactor is Zn(2+).

The protein resides in the cell membrane. Its subcellular location is the cytoplasm. The catalysed reaction is ATP + H2O + cellular proteinSide 1 = ADP + phosphate + cellular proteinSide 2.. Functionally, part of the Sec protein translocase complex. Interacts with the SecYEG preprotein conducting channel. Has a central role in coupling the hydrolysis of ATP to the transfer of proteins into and across the cell membrane, serving as an ATP-driven molecular motor driving the stepwise translocation of polypeptide chains across the membrane. This chain is Protein translocase subunit SecA, found in Alkaliphilus oremlandii (strain OhILAs) (Clostridium oremlandii (strain OhILAs)).